Reading from the N-terminus, the 261-residue chain is Kallikrein-1 (261 aa).

The first 18 residues, 1–18, serve as a signal peptide directing secretion; sequence MRFLILFLALSLGGIDAA. Residues 19-24 constitute a propeptide, activation peptide; that stretch reads PPVQSR. Residues 25-258 form the Peptidase S1 domain; it reads IVGGFNCEKN…FNTWIRETMA (234 aa). Disulfide bonds link Cys31-Cys173, Cys50-Cys66, Cys152-Cys219, Cys184-Cys198, and Cys209-Cys234. Residue His65 is the Charge relay system of the active site. Residue Asn102 is glycosylated (N-linked (GlcNAc...) asparagine). Asp120 serves as the catalytic Charge relay system. Ser213 functions as the Charge relay system in the catalytic mechanism.

This sequence belongs to the peptidase S1 family. Kallikrein subfamily.

It carries out the reaction Preferential cleavage of Arg-|-Xaa bonds in small molecule substrates. Highly selective action to release kallidin (lysyl-bradykinin) from kininogen involves hydrolysis of Met-|-Xaa or Leu-|-Xaa.. Functionally, glandular kallikreins cleave Met-Lys and Arg-Ser bonds in kininogen to release Lys-bradykinin. The protein is Kallikrein-1 (Klk1) of Mus musculus (Mouse).